We begin with the raw amino-acid sequence, 1760 residues long: Cilia- and flagella-associated protein 44 (1760 aa).

5 WD repeats span residues 119–160 (GATK…MVLR), 163–202 (CHNTDVYTVLFSPFDSGLLVSGGAGHIKFWTMANTFTGLK), 213–251 (LEISNVSGFVVLSDGKVISGSESGLIILWEGDLIRCCFA), 276–315 (CHEGAINVVELMEGGRVLMTAGDDGYFRFWRVSELEVAEG), and 388–427 (FNGGSITSAALSPIDHTVVTGGEDGTIRLVDYVTPRELYK). A compositionally biased stretch (basic and acidic residues) spans 1155–1165 (RQEEKLREQTA). Residues 1155–1224 (RQEEKLREQT…FGTAAARTRS (70 aa)) are disordered. A compositionally biased stretch (polar residues) spans 1181-1190 (PATNTDTSGA). A compositionally biased stretch (basic and acidic residues) spans 1194 to 1205 (ATRRSEGEDSRK). A coiled-coil region spans residues 1348–1389 (YDEARNSRDRCLREMEELQRLVQDQTASIEKLQEANKVFRRE). The segment at 1420–1444 (HSDMSGNDDDITSDDDDDDDMGEDE) is disordered. Acidic residues predominate over residues 1425-1444 (GNDDDITSDDDDDDDMGEDE).

It belongs to the CFAP44 family.

Its subcellular location is the cell projection. The protein localises to the cilium. The protein resides in the flagellum. It is found in the cytoplasm. It localises to the cytoskeleton. Its subcellular location is the flagellum axoneme. Its function is as follows. Flagellar protein involved in flagellum axoneme organization and function. This chain is Cilia- and flagella-associated protein 44, found in Trypanosoma brucei brucei (strain 927/4 GUTat10.1).